Consider the following 256-residue polypeptide: Tryptophan synthase alpha chain (256 aa).

Residues E46 and D57 each act as proton acceptor in the active site.

The protein belongs to the TrpA family. In terms of assembly, tetramer of two alpha and two beta chains.

It carries out the reaction (1S,2R)-1-C-(indol-3-yl)glycerol 3-phosphate + L-serine = D-glyceraldehyde 3-phosphate + L-tryptophan + H2O. It functions in the pathway amino-acid biosynthesis; L-tryptophan biosynthesis; L-tryptophan from chorismate: step 5/5. Its function is as follows. The alpha subunit is responsible for the aldol cleavage of indoleglycerol phosphate to indole and glyceraldehyde 3-phosphate. The polypeptide is Tryptophan synthase alpha chain (Bacteroides thetaiotaomicron (strain ATCC 29148 / DSM 2079 / JCM 5827 / CCUG 10774 / NCTC 10582 / VPI-5482 / E50)).